The following is a 488-amino-acid chain: MSNSVEERTRIKNERYESGVIPYAKMGYWDPEYAVKDTDILALFRVSPQPGVDPIEASAAVAGESSTATWTVVWTDLLTACDLYRAKAYKVDAVPNTSDQYFAYIAYDIDLFEEGSIANLTASIIGNVFGFKAIKALRLEDMRIPVAYLKTIQGPATGIIVERERMDKFGRPFLGPTVKPKLGLSGKNYGRVVYEGLRGGLDFLKDDENINSQPFMRWKERFLYSMEAVNRSIAATGEVKGHYMNVTASTMEDMYERAEFAKQLGTVIIMIDLVIGYTAIQSMGIWARKNDMILHLHRAGNSTYSRQKIHGMNFRVICKWMRMAGVDHIHAGTVVGKLEGDPLMIRGFYNTLLLSELAIDLPKGIFFEQDWAALRKVTPVASGGIHCGQMHQLLDYLGNDVVLQFGGGTIGHPDGIQAGATANRVALESMVIARNEERDYVAEGPQILLDAAKTCGPLQTALDLWKDITFNYTSTDTADFVETPTANV.

The substrate site is built by asparagine 127 and threonine 177. Lysine 179 (proton acceptor) is an active-site residue. Substrate is bound at residue lysine 181. 3 residues coordinate Mg(2+): lysine 205, aspartate 207, and glutamate 208. At lysine 205 the chain carries N6-carboxylysine. Histidine 297 serves as the catalytic Proton acceptor. The substrate site is built by arginine 298, histidine 330, and serine 382.

The protein belongs to the RuBisCO large chain family. Type I subfamily. In terms of assembly, heterohexadecamer of 8 large chains and 8 small chains. Requires Mg(2+) as cofactor.

It is found in the plastid. Its subcellular location is the chloroplast. It catalyses the reaction 2 (2R)-3-phosphoglycerate + 2 H(+) = D-ribulose 1,5-bisphosphate + CO2 + H2O. It carries out the reaction D-ribulose 1,5-bisphosphate + O2 = 2-phosphoglycolate + (2R)-3-phosphoglycerate + 2 H(+). RuBisCO catalyzes two reactions: the carboxylation of D-ribulose 1,5-bisphosphate, the primary event in carbon dioxide fixation, as well as the oxidative fragmentation of the pentose substrate in the photorespiration process. Both reactions occur simultaneously and in competition at the same active site. The polypeptide is Ribulose bisphosphate carboxylase large chain (Antithamnion sp. (Red alga)).